We begin with the raw amino-acid sequence, 368 residues long: Glutamate 5-kinase (368 aa).

Residue K15 coordinates ATP. Substrate contacts are provided by S55, D143, and N155. ATP-binding positions include 175-176 (SD) and 217-223 (SGGMVSK). The region spanning 277–354 (EGRLTIDAGA…DAQEAALGYA (78 aa)) is the PUA domain.

It belongs to the glutamate 5-kinase family.

It localises to the cytoplasm. It carries out the reaction L-glutamate + ATP = L-glutamyl 5-phosphate + ADP. It functions in the pathway amino-acid biosynthesis; L-proline biosynthesis; L-glutamate 5-semialdehyde from L-glutamate: step 1/2. In terms of biological role, catalyzes the transfer of a phosphate group to glutamate to form L-glutamate 5-phosphate. This is Glutamate 5-kinase from Sphingopyxis alaskensis (strain DSM 13593 / LMG 18877 / RB2256) (Sphingomonas alaskensis).